Here is a 190-residue protein sequence, read N- to C-terminus: dITP/XTP pyrophosphatase (190 aa).

10–15 (TTNKHK) is a binding site for substrate. The Mg(2+) site is built by Glu39 and Asp68. The active-site Proton acceptor is Asp68. Residues Ala69, 143-146 (FGYD), Lys166, and 171-172 (HR) contribute to the substrate site.

It belongs to the HAM1 NTPase family. As to quaternary structure, homodimer. Mg(2+) is required as a cofactor.

The enzyme catalyses XTP + H2O = XMP + diphosphate + H(+). It carries out the reaction dITP + H2O = dIMP + diphosphate + H(+). The catalysed reaction is ITP + H2O = IMP + diphosphate + H(+). Pyrophosphatase that catalyzes the hydrolysis of nucleoside triphosphates to their monophosphate derivatives, with a high preference for the non-canonical purine nucleotides XTP (xanthosine triphosphate), dITP (deoxyinosine triphosphate) and ITP. Seems to function as a house-cleaning enzyme that removes non-canonical purine nucleotides from the nucleotide pool, thus preventing their incorporation into DNA/RNA and avoiding chromosomal lesions. In Hyperthermus butylicus (strain DSM 5456 / JCM 9403 / PLM1-5), this protein is dITP/XTP pyrophosphatase.